Here is a 438-residue protein sequence, read N- to C-terminus: Aspartate--tRNA(Asp) ligase (438 aa).

Glutamate 170 is a binding site for L-aspartate. Residues 192-195 (QLYK) form an aspartate region. Arginine 214 is an L-aspartate binding site. ATP is bound by residues 214–216 (RAE), 222–224 (RHL), and glutamate 361. Positions 361 and 364 each coordinate Mg(2+). L-aspartate is bound by residues serine 364 and arginine 368. Position 409-412 (409-412 (GAER)) interacts with ATP.

The protein belongs to the class-II aminoacyl-tRNA synthetase family. Type 2 subfamily. Homodimer. It depends on Mg(2+) as a cofactor.

The protein localises to the cytoplasm. The catalysed reaction is tRNA(Asp) + L-aspartate + ATP = L-aspartyl-tRNA(Asp) + AMP + diphosphate. In terms of biological role, catalyzes the attachment of L-aspartate to tRNA(Asp) in a two-step reaction: L-aspartate is first activated by ATP to form Asp-AMP and then transferred to the acceptor end of tRNA(Asp). The polypeptide is Aspartate--tRNA(Asp) ligase (Pyrococcus furiosus (strain ATCC 43587 / DSM 3638 / JCM 8422 / Vc1)).